A 227-amino-acid polypeptide reads, in one-letter code: ATP-dependent dethiobiotin synthetase BioD (227 aa).

13-18 (DVGKTV) lines the ATP pocket. Threonine 17 is a Mg(2+) binding site. Residue lysine 38 is part of the active site. Residues aspartate 55, 116–119 (EGAG), 176–177 (NR), and 205–207 (PYI) each bind ATP. 2 residues coordinate Mg(2+): aspartate 55 and glutamate 116.

It belongs to the dethiobiotin synthetase family. In terms of assembly, homodimer. Mg(2+) is required as a cofactor.

The protein resides in the cytoplasm. The enzyme catalyses (7R,8S)-7,8-diammoniononanoate + CO2 + ATP = (4R,5S)-dethiobiotin + ADP + phosphate + 3 H(+). The protein operates within cofactor biosynthesis; biotin biosynthesis; biotin from 7,8-diaminononanoate: step 1/2. Functionally, catalyzes a mechanistically unusual reaction, the ATP-dependent insertion of CO2 between the N7 and N8 nitrogen atoms of 7,8-diaminopelargonic acid (DAPA, also called 7,8-diammoniononanoate) to form a ureido ring. In Vibrio vulnificus (strain CMCP6), this protein is ATP-dependent dethiobiotin synthetase BioD.